Here is a 218-residue protein sequence, read N- to C-terminus: Small ribosomal subunit protein uS3 (218 aa).

In terms of domain architecture, KH type-2 spans 38–106; it reads IREFINQRLS…RVHINILEIK (69 aa).

It belongs to the universal ribosomal protein uS3 family. As to quaternary structure, part of the 30S ribosomal subunit. Forms a tight complex with proteins S10 and S14.

In terms of biological role, binds the lower part of the 30S subunit head. Binds mRNA in the 70S ribosome, positioning it for translation. The protein is Small ribosomal subunit protein uS3 of Bacillus licheniformis (strain ATCC 14580 / DSM 13 / JCM 2505 / CCUG 7422 / NBRC 12200 / NCIMB 9375 / NCTC 10341 / NRRL NRS-1264 / Gibson 46).